We begin with the raw amino-acid sequence, 500 residues long: L-arabinose isomerase (500 aa).

Mn(2+) is bound by residues glutamate 306, glutamate 333, histidine 349, and histidine 448.

It belongs to the arabinose isomerase family. It depends on Mn(2+) as a cofactor.

It carries out the reaction beta-L-arabinopyranose = L-ribulose. Its pathway is carbohydrate degradation; L-arabinose degradation via L-ribulose; D-xylulose 5-phosphate from L-arabinose (bacterial route): step 1/3. Catalyzes the conversion of L-arabinose to L-ribulose. This chain is L-arabinose isomerase, found in Shewanella sp. (strain ANA-3).